The following is a 301-amino-acid chain: Immediate early response gene 5-like protein (301 aa).

The protein belongs to the IER family.

This Danio rerio (Zebrafish) protein is Immediate early response gene 5-like protein (ier5l).